A 119-amino-acid chain; its full sequence is Large ribosomal subunit protein bL19 (119 aa).

The protein belongs to the bacterial ribosomal protein bL19 family.

Its function is as follows. This protein is located at the 30S-50S ribosomal subunit interface and may play a role in the structure and function of the aminoacyl-tRNA binding site. This chain is Large ribosomal subunit protein bL19, found in Pediococcus pentosaceus (strain ATCC 25745 / CCUG 21536 / LMG 10740 / 183-1w).